The chain runs to 86 residues: Large ribosomal subunit protein uL23 (86 aa).

The protein belongs to the universal ribosomal protein uL23 family. As to quaternary structure, part of the 50S ribosomal subunit. Contacts protein L29.

Its function is as follows. Binds to 23S rRNA. One of the proteins that surrounds the polypeptide exit tunnel on the outside of the ribosome. The sequence is that of Large ribosomal subunit protein uL23 from Methanosphaera stadtmanae (strain ATCC 43021 / DSM 3091 / JCM 11832 / MCB-3).